Here is a 285-residue protein sequence, read N- to C-terminus: 2,3,4,5-tetrahydropyridine-2,6-dicarboxylate N-succinyltransferase (285 aa).

2 residues coordinate substrate: R111 and D148.

It belongs to the transferase hexapeptide repeat family. Homotrimer.

It is found in the cytoplasm. The enzyme catalyses (S)-2,3,4,5-tetrahydrodipicolinate + succinyl-CoA + H2O = (S)-2-succinylamino-6-oxoheptanedioate + CoA. It participates in amino-acid biosynthesis; L-lysine biosynthesis via DAP pathway; LL-2,6-diaminopimelate from (S)-tetrahydrodipicolinate (succinylase route): step 1/3. The sequence is that of 2,3,4,5-tetrahydropyridine-2,6-dicarboxylate N-succinyltransferase from Allorhizobium ampelinum (strain ATCC BAA-846 / DSM 112012 / S4) (Agrobacterium vitis (strain S4)).